The following is a 225-amino-acid chain: Cytidylate kinase (225 aa).

11–19 (GPAAAGKST) contributes to the ATP binding site.

Belongs to the cytidylate kinase family. Type 1 subfamily.

It is found in the cytoplasm. It carries out the reaction CMP + ATP = CDP + ADP. The enzyme catalyses dCMP + ATP = dCDP + ADP. This Bacillus cereus (strain AH187) protein is Cytidylate kinase.